Consider the following 471-residue polypeptide: UDP-N-acetylmuramate--L-alanine ligase (471 aa).

122 to 128 (GTHGKTT) contacts ATP.

This sequence belongs to the MurCDEF family.

The protein localises to the cytoplasm. The catalysed reaction is UDP-N-acetyl-alpha-D-muramate + L-alanine + ATP = UDP-N-acetyl-alpha-D-muramoyl-L-alanine + ADP + phosphate + H(+). It participates in cell wall biogenesis; peptidoglycan biosynthesis. Cell wall formation. This Cutibacterium acnes (strain DSM 16379 / KPA171202) (Propionibacterium acnes) protein is UDP-N-acetylmuramate--L-alanine ligase.